A 232-amino-acid chain; its full sequence is Flagellar L-ring protein (232 aa).

The signal sequence occupies residues 1–21; the sequence is MQKNAAHTYAISSLLVLSLTG. Residue Cys22 is the site of N-palmitoyl cysteine attachment. Cys22 is lipidated: S-diacylglycerol cysteine.

This sequence belongs to the FlgH family. The basal body constitutes a major portion of the flagellar organelle and consists of four rings (L,P,S, and M) mounted on a central rod.

Its subcellular location is the cell outer membrane. It is found in the bacterial flagellum basal body. Assembles around the rod to form the L-ring and probably protects the motor/basal body from shearing forces during rotation. The chain is Flagellar L-ring protein from Shigella boydii serotype 4 (strain Sb227).